The sequence spans 183 residues: ATP-dependent protease subunit HslV (183 aa).

Residue T7 is part of the active site. The Na(+) site is built by G162, C165, and T168.

The protein belongs to the peptidase T1B family. HslV subfamily. A double ring-shaped homohexamer of HslV is capped on each side by a ring-shaped HslU homohexamer. The assembly of the HslU/HslV complex is dependent on binding of ATP.

Its subcellular location is the cytoplasm. The catalysed reaction is ATP-dependent cleavage of peptide bonds with broad specificity.. Its activity is regulated as follows. Allosterically activated by HslU binding. In terms of biological role, protease subunit of a proteasome-like degradation complex believed to be a general protein degrading machinery. The polypeptide is ATP-dependent protease subunit HslV (Alkalilimnicola ehrlichii (strain ATCC BAA-1101 / DSM 17681 / MLHE-1)).